We begin with the raw amino-acid sequence, 430 residues long: MDVVDSLFVNGSNITSACELGFENETLFCLDRPRPSKEWQPAVQILLYSLIFLLSVLGNTLVITVLIRNKRMRTVTNIFLLSLAVSDLMLCLFCMPFNLIPSLLKDFIFGSAVCKTTTYFMGTSVSVSTFNLVAISLERYGAICKPLQSRVWQTKSHALKVIAATWCLSFTIMTPYPIYSNLVPFTKNNNQTGNMCRFLLPNDVMQQTWHTFLLLILFLIPGIVMMVAYGLISLELYQGIKFDAIQKKSAKERKTSTGSSGPMEDSDGCYLQKSRHPRKLELRQLSPSSSGSNRINRIRSSSSTANLMAKKRVIRMLIVIVVLFFLCWMPIFSANAWRAYDTVSAERHLSGTPISFILLLSYTSSCVNPIIYCFMNKRFRLGFMATFPCCPNPGTPGVRGEMGEEEEGRTTGASLSRYSYSHMSTSAPPP.

Over 1 to 41 the chain is Extracellular; the sequence is MDVVDSLFVNGSNITSACELGFENETLFCLDRPRPSKEWQP. N-linked (GlcNAc...) asparagine glycosylation is found at Asn-10, Asn-13, and Asn-24. Cys-18 and Cys-29 are joined by a disulfide. A helical membrane pass occupies residues 42 to 67; the sequence is AVQILLYSLIFLLSVLGNTLVITVLI. Topologically, residues 68–77 are cytoplasmic; sequence RNKRMRTVTN. A helical transmembrane segment spans residues 78 to 104; sequence IFLLSLAVSDLMLCLFCMPFNLIPSLL. Residues 105-115 lie on the Extracellular side of the membrane; the sequence is KDFIFGSAVCK. Cys-114 and Cys-196 are joined by a disulfide. The chain crosses the membrane as a helical span at residues 116 to 137; sequence TTTYFMGTSVSVSTFNLVAISL. The Cytoplasmic portion of the chain corresponds to 138-157; sequence ERYGAICKPLQSRVWQTKSH. A helical membrane pass occupies residues 158 to 178; it reads ALKVIAATWCLSFTIMTPYPI. Residues 179-210 lie on the Extracellular side of the membrane; sequence YSNLVPFTKNNNQTGNMCRFLLPNDVMQQTWH. Asn-190 is a glycosylation site (N-linked (GlcNAc...) asparagine). A helical membrane pass occupies residues 211 to 234; it reads TFLLLILFLIPGIVMMVAYGLISL. Residues 235–315 lie on the Cytoplasmic side of the membrane; sequence ELYQGIKFDA…NLMAKKRVIR (81 aa). Residues 316 to 336 traverse the membrane as a helical segment; sequence MLIVIVVLFFLCWMPIFSANA. The Extracellular portion of the chain corresponds to 337–351; sequence WRAYDTVSAERHLSG. Residues 352–375 form a helical membrane-spanning segment; that stretch reads TPISFILLLSYTSSCVNPIIYCFM. At 376–430 the chain is on the cytoplasmic side; sequence NKRFRLGFMATFPCCPNPGTPGVRGEMGEEEEGRTTGASLSRYSYSHMSTSAPPP. Cys-389 is lipidated: S-palmitoyl cysteine. A disordered region spans residues 396–430; that stretch reads PGVRGEMGEEEEGRTTGASLSRYSYSHMSTSAPPP. Residues 413–430 are compositionally biased toward polar residues; it reads ASLSRYSYSHMSTSAPPP.

It belongs to the G-protein coupled receptor 1 family.

It is found in the cell membrane. Its function is as follows. Receptor for cholecystokinin. Mediates pancreatic growth and enzyme secretion, smooth muscle contraction of the gall bladder and stomach. Has a 1000-fold higher affinity for CCK rather than for gastrin. It modulates feeding and dopamine-induced behavior in the central and peripheral nervous system. This receptor mediates its action by association with G proteins that activate a phosphatidylinositol-calcium second messenger system. The sequence is that of Cholecystokinin receptor type A (CCKAR) from Cavia porcellus (Guinea pig).